The chain runs to 99 residues: Signal recognition particle 19 kDa protein (99 aa).

Belongs to the SRP19 family. Part of the signal recognition particle protein translocation system, which is composed of SRP and FtsY. Archaeal SRP consists of a 7S RNA molecule of 300 nucleotides and two protein subunits: SRP54 and SRP19.

It localises to the cytoplasm. In terms of biological role, involved in targeting and insertion of nascent membrane proteins into the cytoplasmic membrane. Binds directly to 7S RNA and mediates binding of the 54 kDa subunit of the SRP. This chain is Signal recognition particle 19 kDa protein, found in Pyrococcus horikoshii (strain ATCC 700860 / DSM 12428 / JCM 9974 / NBRC 100139 / OT-3).